A 531-amino-acid polypeptide reads, in one-letter code: PHD finger protein 21B (531 aa).

Disordered regions lie at residues Pro79–Gln99, Ser184–Pro222, Val238–Glu277, and Glu295–Ser314. Residues Lys265–Glu277 show a composition bias toward basic and acidic residues. The PHD-type zinc finger occupies Asp352–Lys399. A coiled-coil region spans residues Lys423–Lys465. Residues Leu507–Asn531 form a disordered region. Polar residues predominate over residues Pro522–Asn531.

The polypeptide is PHD finger protein 21B (PHF21B) (Homo sapiens (Human)).